Consider the following 571-residue polypeptide: Sulfite reductase [NADPH] hemoprotein beta-component (571 aa).

The [4Fe-4S] cluster site is built by C435, C441, C480, and C484. C484 contacts siroheme.

The protein belongs to the nitrite and sulfite reductase 4Fe-4S domain family. As to quaternary structure, alpha(8)-beta(8). The alpha component is a flavoprotein, the beta component is a hemoprotein. Siroheme serves as cofactor. Requires [4Fe-4S] cluster as cofactor.

It catalyses the reaction hydrogen sulfide + 3 NADP(+) + 3 H2O = sulfite + 3 NADPH + 4 H(+). It participates in sulfur metabolism; hydrogen sulfide biosynthesis; hydrogen sulfide from sulfite (NADPH route): step 1/1. Functionally, component of the sulfite reductase complex that catalyzes the 6-electron reduction of sulfite to sulfide. This is one of several activities required for the biosynthesis of L-cysteine from sulfate. The protein is Sulfite reductase [NADPH] hemoprotein beta-component of Musicola paradisiaca (strain Ech703) (Dickeya paradisiaca).